The primary structure comprises 347 residues: NADH-ubiquinone oxidoreductase chain 2 (347 aa).

The next 11 helical transmembrane spans lie at Pro-3–Gly-23, His-25–Met-45, Tyr-59–Met-79, Ile-96–Pro-116, Gly-127–Pro-147, Gly-148–Gly-168, Ile-178–Pro-198, Thr-201–Ile-221, Thr-247–Ile-267, Ile-276–Leu-296, and Leu-325–Ile-345.

This sequence belongs to the complex I subunit 2 family. In terms of assembly, core subunit of respiratory chain NADH dehydrogenase (Complex I) which is composed of 45 different subunits. Interacts with TMEM242.

The protein localises to the mitochondrion inner membrane. The enzyme catalyses a ubiquinone + NADH + 5 H(+)(in) = a ubiquinol + NAD(+) + 4 H(+)(out). Functionally, core subunit of the mitochondrial membrane respiratory chain NADH dehydrogenase (Complex I) which catalyzes electron transfer from NADH through the respiratory chain, using ubiquinone as an electron acceptor. Essential for the catalytic activity and assembly of complex I. This is NADH-ubiquinone oxidoreductase chain 2 from Ozimops beccarii (Beccari's free-tailed bat).